Consider the following 355-residue polypeptide: uncharacterized protein (355 aa).

This sequence belongs to the carbohydrate kinase PfkB family.

This is an uncharacterized protein from Dictyostelium discoideum (Social amoeba).